The primary structure comprises 184 residues: Protein GrpE (184 aa).

Belongs to the GrpE family. Homodimer.

The protein resides in the cytoplasm. In terms of biological role, participates actively in the response to hyperosmotic and heat shock by preventing the aggregation of stress-denatured proteins, in association with DnaK and GrpE. It is the nucleotide exchange factor for DnaK and may function as a thermosensor. Unfolded proteins bind initially to DnaJ; upon interaction with the DnaJ-bound protein, DnaK hydrolyzes its bound ATP, resulting in the formation of a stable complex. GrpE releases ADP from DnaK; ATP binding to DnaK triggers the release of the substrate protein, thus completing the reaction cycle. Several rounds of ATP-dependent interactions between DnaJ, DnaK and GrpE are required for fully efficient folding. In Pseudomonas putida (strain GB-1), this protein is Protein GrpE.